Reading from the N-terminus, the 353-residue chain is UPF0283 membrane protein YPTS_2342 (353 aa).

Helical transmembrane passes span 71 to 91 (MVTAGMVILGASVIAQSVQWV), 101 to 121 (IALGATTAGGLIILAGVGSVV), and 214 to 234 (ESALMIAVSPLALVDMAFIAW).

It belongs to the UPF0283 family.

The protein resides in the cell inner membrane. The protein is UPF0283 membrane protein YPTS_2342 of Yersinia pseudotuberculosis serotype IB (strain PB1/+).